Reading from the N-terminus, the 299-residue chain is Aspartate carbamoyltransferase catalytic subunit (299 aa).

Carbamoyl phosphate is bound by residues Arg-51 and Thr-52. Lys-79 lines the L-aspartate pocket. Residues Arg-101, His-130, and Gln-133 each coordinate carbamoyl phosphate. L-aspartate contacts are provided by Arg-163 and Arg-215. 2 residues coordinate carbamoyl phosphate: Gly-256 and Pro-257.

The protein belongs to the aspartate/ornithine carbamoyltransferase superfamily. ATCase family. As to quaternary structure, heterododecamer (2C3:3R2) of six catalytic PyrB chains organized as two trimers (C3), and six regulatory PyrI chains organized as three dimers (R2).

It carries out the reaction carbamoyl phosphate + L-aspartate = N-carbamoyl-L-aspartate + phosphate + H(+). Its pathway is pyrimidine metabolism; UMP biosynthesis via de novo pathway; (S)-dihydroorotate from bicarbonate: step 2/3. In terms of biological role, catalyzes the condensation of carbamoyl phosphate and aspartate to form carbamoyl aspartate and inorganic phosphate, the committed step in the de novo pyrimidine nucleotide biosynthesis pathway. The sequence is that of Aspartate carbamoyltransferase catalytic subunit from Ehrlichia chaffeensis (strain ATCC CRL-10679 / Arkansas).